Consider the following 379-residue polypeptide: ATP-sensitive inward rectifier potassium channel 10 (379 aa).

Topologically, residues 1 to 61 (MTSVAKVYYS…LKDLWTTFID (61 aa)) are cytoplasmic. Residue arginine 36 participates in 1,2-dioctanoyl-sn-glycero-3-phospho-(1D-myo-inositol-4,5-bisphosphate) binding. A helical transmembrane segment spans residues 62 to 88 (MQWRYKLLLFSATFAGTWFLFGVVWYL). Residues 89 to 114 (VAVAHGDLLELGPPANHTPCVVQVHT) are Extracellular-facing. Cysteine 108 and cysteine 140 are joined by a disulfide. Residues 115 to 131 (LTGAFLFSLESQTTIGY) constitute an intramembrane region (discontinuously helical; Pore-forming). A Selectivity filter motif is present at residues 128–133 (TIGYGF). Topologically, residues 132–140 (GFRYISEEC) are extracellular. Residues 141–166 (PLAIVLLIAQLVLTTILEIFITGTFL) form a helical membrane-spanning segment. The Cytoplasmic segment spans residues 167–379 (AKIARPKKRA…SALSVRISNV (213 aa)). 1,2-dioctanoyl-sn-glycero-3-phospho-(1D-myo-inositol-4,5-bisphosphate) contacts are provided by lysine 168, arginine 171, and lysine 173. Residue 210–217 (GCQVTGKL) coordinates ATP.

Belongs to the inward rectifier-type potassium channel (TC 1.A.2.1) family. KCNJ10 subfamily. Homotetramer. In kidney cells, it forms heteromeric channels with Kir5.1/KCNJ16; this interaction is required for KCNJ16 localization to the basolateral membrane. Interacts with MAGI1, alone and possibly as a heteromer with KCNJ16; this interaction may facilitate KCNJ10/KCNJ16 potassium channel expression at the basolateral membrane in kidney cells. Interacts with PATJ. As to expression, widely expressed in adult brain, including in the neocortex, the stratum pyrimadale of the hippocampus and the piriform cortex. Expressed by cultured astrocytes and also by cocultured cortical neurons (at protein level). In the distal segment of the nephron, expressed in the distal convoluted tubule, the connecting tubule, and the early cortical collecting duct.

It localises to the membrane. Its subcellular location is the basolateral cell membrane. It catalyses the reaction K(+)(in) = K(+)(out). Channel activity is strongly regulated by variations of cytosolic pH; channels are activated by alkaline and inhibited by acidic pH values. Activated by phosphatidylinositol 4,5 biphosphate (PtdIns(4,5)P2). Inhibited by Ba(2+) and Cs(+). May be responsible for potassium buffering action of glial cells in the brain. Inward rectifier potassium channels are characterized by a greater tendency to allow potassium to flow into the cell rather than out of it. Their voltage dependence is regulated by the concentration of extracellular potassium; as external potassium is raised, the voltage range of the channel opening shifts to more positive voltages. The inward rectification is mainly due to the blockage of outward current by internal magnesium. Can be blocked by extracellular barium and cesium. In the kidney, together with KCNJ16, mediates basolateral K(+) recycling in distal tubules; this process is critical for Na(+) reabsorption at the tubules. The chain is ATP-sensitive inward rectifier potassium channel 10 from Mus musculus (Mouse).